Reading from the N-terminus, the 702-residue chain is Putative methyltransferase NSUN7 (702 aa).

Catalysis depends on Cys-424, which acts as the Nucleophile. 3 disordered regions span residues 522-541 (KSSK…TKAA), 567-593 (ETVT…KHKL), and 675-702 (PTPS…RRWL). A compositionally biased stretch (basic residues) spans 523–534 (SSKREKKKKKSK). The segment covering 567–587 (ETVTKPSLPQKNTAQVGASSQ) has biased composition (polar residues). Residues 681–691 (RKGEKPKDDTR) show a composition bias toward basic and acidic residues.

This sequence belongs to the class I-like SAM-binding methyltransferase superfamily. RsmB/NOP family.

Its function is as follows. May have S-adenosyl-L-methionine-dependent methyl-transferase activity. This chain is Putative methyltransferase NSUN7 (NSUN7), found in Macaca fascicularis (Crab-eating macaque).